Consider the following 268-residue polypeptide: Tryptophan synthase alpha chain (268 aa).

Residues glutamate 49 and aspartate 60 each act as proton acceptor in the active site.

This sequence belongs to the TrpA family. Tetramer of two alpha and two beta chains.

It catalyses the reaction (1S,2R)-1-C-(indol-3-yl)glycerol 3-phosphate + L-serine = D-glyceraldehyde 3-phosphate + L-tryptophan + H2O. Its pathway is amino-acid biosynthesis; L-tryptophan biosynthesis; L-tryptophan from chorismate: step 5/5. In terms of biological role, the alpha subunit is responsible for the aldol cleavage of indoleglycerol phosphate to indole and glyceraldehyde 3-phosphate. This chain is Tryptophan synthase alpha chain, found in Pseudomonas aeruginosa (strain UCBPP-PA14).